The primary structure comprises 296 residues: Ribonuclease HIII (296 aa).

One can recognise an RNase H type-2 domain in the interval 80-296 (LALIGSDEVG…NTKKAYQRLK (217 aa)). Aspartate 86, glutamate 87, and aspartate 191 together coordinate a divalent metal cation.

Belongs to the RNase HII family. RnhC subfamily. The cofactor is Mn(2+). Mg(2+) is required as a cofactor.

It is found in the cytoplasm. It carries out the reaction Endonucleolytic cleavage to 5'-phosphomonoester.. Functionally, endonuclease that specifically degrades the RNA of RNA-DNA hybrids. This Streptococcus thermophilus (strain ATCC BAA-491 / LMD-9) protein is Ribonuclease HIII.